Reading from the N-terminus, the 447-residue chain is Tubulin beta chain (447 aa).

8 residues coordinate GTP: Gln-11, Glu-69, Ser-138, Gly-142, Thr-143, Gly-144, Asn-204, and Asn-226. Glu-69 is a binding site for Mg(2+). A disordered region spans residues 424–447 (QYQEASVSDAEEEYDEEAPLEGEE). Residues 432 to 447 (DAEEEYDEEAPLEGEE) are compositionally biased toward acidic residues.

The protein belongs to the tubulin family. Dimer of alpha and beta chains. A typical microtubule is a hollow water-filled tube with an outer diameter of 25 nm and an inner diameter of 15 nM. Alpha-beta heterodimers associate head-to-tail to form protofilaments running lengthwise along the microtubule wall with the beta-tubulin subunit facing the microtubule plus end conferring a structural polarity. Microtubules usually have 13 protofilaments but different protofilament numbers can be found in some organisms and specialized cells. Mg(2+) is required as a cofactor.

It localises to the cytoplasm. The protein localises to the cytoskeleton. Tubulin is the major constituent of microtubules, a cylinder consisting of laterally associated linear protofilaments composed of alpha- and beta-tubulin heterodimers. Microtubules grow by the addition of GTP-tubulin dimers to the microtubule end, where a stabilizing cap forms. Below the cap, tubulin dimers are in GDP-bound state, owing to GTPase activity of alpha-tubulin. The chain is Tubulin beta chain (TUB1) from Zymoseptoria tritici (Speckled leaf blotch fungus).